The following is a 279-amino-acid chain: Acyl-[acyl-carrier-protein]--UDP-N-acetylglucosamine O-acyltransferase (279 aa).

The segment at 260 to 279 (AAKEAFQEESVDKEGALVES) is disordered.

Belongs to the transferase hexapeptide repeat family. LpxA subfamily. In terms of assembly, homotrimer.

It is found in the cytoplasm. The enzyme catalyses a (3R)-hydroxyacyl-[ACP] + UDP-N-acetyl-alpha-D-glucosamine = a UDP-3-O-[(3R)-3-hydroxyacyl]-N-acetyl-alpha-D-glucosamine + holo-[ACP]. It participates in glycolipid biosynthesis; lipid IV(A) biosynthesis; lipid IV(A) from (3R)-3-hydroxytetradecanoyl-[acyl-carrier-protein] and UDP-N-acetyl-alpha-D-glucosamine: step 1/6. In terms of biological role, involved in the biosynthesis of lipid A, a phosphorylated glycolipid that anchors the lipopolysaccharide to the outer membrane of the cell. This is Acyl-[acyl-carrier-protein]--UDP-N-acetylglucosamine O-acyltransferase from Chlamydia abortus (strain DSM 27085 / S26/3) (Chlamydophila abortus).